The following is a 528-amino-acid chain: Ribonuclease Y (528 aa).

Residues 15–35 (SLLVFALICGSIIGYFLYSFF) form a helical membrane-spanning segment. The 61-residue stretch at 217–277 (NISVVNIPNE…IRREIAKKTL (61 aa)) folds into the KH domain. An HD domain is found at 343–436 (VLKHSLEVAF…VAIADTLSSA (94 aa)).

It belongs to the RNase Y family.

It is found in the cell membrane. In terms of biological role, endoribonuclease that initiates mRNA decay. This Onion yellows phytoplasma (strain OY-M) protein is Ribonuclease Y.